Consider the following 88-residue polypeptide: Small ribosomal subunit protein uS17 (88 aa).

The protein belongs to the universal ribosomal protein uS17 family. In terms of assembly, part of the 30S ribosomal subunit.

Its function is as follows. One of the primary rRNA binding proteins, it binds specifically to the 5'-end of 16S ribosomal RNA. In Pseudomonas putida (strain ATCC 700007 / DSM 6899 / JCM 31910 / BCRC 17059 / LMG 24140 / F1), this protein is Small ribosomal subunit protein uS17.